The following is a 127-amino-acid chain: MWLTKPSTPVSALLLLALALSPPGTQGRPQRSLAARVAELRPELFLPVTGTRLPPRASRSTEIFPRDLTLKDKFIKHFTGPVTFSAECSKHFHRLYHNTRDCSTPAYYKRCARLLTRLAVSPLCSQT.

Positions 1–27 are cleaved as a signal peptide; that stretch reads MWLTKPSTPVSALLLLALALSPPGTQG. 2 cysteine pairs are disulfide-bonded: C88-C124 and C102-C111.

This sequence belongs to the ALKAL family.

It is found in the secreted. The protein localises to the cell membrane. Cytokine that acts as a physiological ligand for receptor tyrosine kinase LTK, leading to its activation. Monomeric ALKAL1 binds to LTK, leading to LTK homodimerization and activation. In contrast to ALKAL2, does not act as a potent physiological ligand for ALK. The chain is ALK and LTK ligand 1 from Mus musculus (Mouse).